Here is a 436-residue protein sequence, read N- to C-terminus: Enolase (436 aa).

Substrate contacts are provided by H159 and E168. E211 (proton donor) is an active-site residue. Mg(2+) is bound by residues D246, E295, and D322. Residues E295 and D322 each coordinate substrate. K347 (proton acceptor) is an active-site residue. Substrate contacts are provided by residues S374 to S377 and K398.

It belongs to the enolase family. In terms of assembly, homodimer. Mg(2+) serves as cofactor.

The protein resides in the cytoplasm. The enzyme catalyses (2R)-2-phosphoglycerate = phosphoenolpyruvate + H2O. It functions in the pathway carbohydrate degradation; glycolysis; pyruvate from D-glyceraldehyde 3-phosphate: step 4/5. This chain is Enolase, found in Neocallimastix frontalis (Rumen fungus).